Here is a 3120-residue protein sequence, read N- to C-terminus: DNA-directed RNA polymerase subunit beta'' (3120 aa).

C323, C396, C403, and C406 together coordinate Zn(2+). The tract at residues 595–1130 (FIGEGKQNVL…LKTLVLKKWF (536 aa)) is insert-1. The insert-2 stretch occupies residues 1796–2346 (KGHLVAYARP…NGIIQAKSLL (551 aa)). An insert-3 region spans residues 2422–2610 (NSNFLENTHF…PEGEGEKDMT (189 aa)). The segment at 2726 to 2801 (FSKKRWKKSI…KQNQTIILAL (76 aa)) is insert-4. An insert-5 region spans residues 2856 to 2996 (ASKMSEYMFS…LNQLLSNNLD (141 aa)). A disordered region spans residues 2926–2956 (EGIDSSKIPSSNIPEGKVTQNNKRKSTRKNV). A compositionally biased stretch (polar residues) spans 2932 to 2946 (KIPSSNIPEGKVTQN).

It belongs to the RNA polymerase beta' chain family. RpoC2 subfamily. In terms of assembly, in plastids the minimal PEP RNA polymerase catalytic core is composed of four subunits: alpha, beta, beta', and beta''. When a (nuclear-encoded) sigma factor is associated with the core the holoenzyme is formed, which can initiate transcription. Zn(2+) serves as cofactor.

Its subcellular location is the plastid. The protein resides in the chloroplast. The enzyme catalyses RNA(n) + a ribonucleoside 5'-triphosphate = RNA(n+1) + diphosphate. Functionally, DNA-dependent RNA polymerase catalyzes the transcription of DNA into RNA using the four ribonucleoside triphosphates as substrates. In Chlamydomonas reinhardtii (Chlamydomonas smithii), this protein is DNA-directed RNA polymerase subunit beta''.